A 194-amino-acid polypeptide reads, in one-letter code: Archaetidylinositol phosphate synthase (194 aa).

Helical transmembrane passes span 32–51 and 58–78; these read IYTL…WLYI and LLIA…RFTG. The Mg(2+) site is built by aspartate 67, aspartate 70, aspartate 88, and aspartate 92. Aspartate 92 (proton acceptor) is an active-site residue. 3 helical membrane passes run 103 to 123, 150 to 170, and 172 to 192; these read LYIA…GLIV, IAIL…LALA, and AAAV…AGEL.

It belongs to the CDP-alcohol phosphatidyltransferase class-I family. Mn(2+) is required as a cofactor. Requires Mg(2+) as cofactor.

It is found in the cell membrane. The catalysed reaction is CDP-2,3-bis-O-(phytanyl)-sn-glycerol + 1D-myo-inositol 3-phosphate = saturated 1-archaetidyl-1D-myo-inositol 3-phosphate + CMP + H(+). Its pathway is lipid metabolism; phospholipid metabolism. In terms of biological role, catalyzes the formation of archaetidylinositol phosphate (AIP) from CDP-archaeol (CDP-ArOH or CDP-2,3-bis-(O-phytanyl)-sn-glycerol) and 1L-myo-inositol 1-phosphate (IP or 1D-myo-inositol 3-phosphate). AIP is a precursor of archaetidyl-myo-inositol (AI), an ether-type inositol phospholipid ubiquitously distributed in archaea membranes and essential for glycolipid biosynthesis in archaea. The sequence is that of Archaetidylinositol phosphate synthase from Aeropyrum pernix (strain ATCC 700893 / DSM 11879 / JCM 9820 / NBRC 100138 / K1).